The following is a 440-amino-acid chain: Trigger factor (440 aa).

A PPIase FKBP-type domain is found at 163–248; sequence GEIVSVTFEA…VHVIKERTLP (86 aa).

This sequence belongs to the FKBP-type PPIase family. Tig subfamily.

It localises to the cytoplasm. It carries out the reaction [protein]-peptidylproline (omega=180) = [protein]-peptidylproline (omega=0). In terms of biological role, involved in protein export. Acts as a chaperone by maintaining the newly synthesized protein in an open conformation. Functions as a peptidyl-prolyl cis-trans isomerase. This Solidesulfovibrio magneticus (strain ATCC 700980 / DSM 13731 / RS-1) (Desulfovibrio magneticus) protein is Trigger factor.